A 328-amino-acid polypeptide reads, in one-letter code: GATA transcription factor 17 (328 aa).

Positions 1 to 68 (MSGHHEAKPY…EEYEGGEGVP (68 aa)) are disordered. Over residues 14–29 (RGPAPADEEAAPAAAA) the composition is skewed to low complexity. 2 stretches are compositionally biased toward acidic residues: residues 30–39 (DEAEAEAEVE) and 47–63 (EQEYEEGEEGEEEEYEG). A Tify domain is found at 100-135 (PHVASNTLTLSFQGEVYVFESVSAERVQAVLLLLGG). Positions 161 to 203 (RMASLMRFREKRKERNFDKKIRYTVRKEVALRMQRNRGQFTSS) constitute a CCT domain. A disordered region spans residues 198-231 (GQFTSSKSKAEEATSVITSSEGSPNWGAVEGRPP). Residues 236–263 (CHHCGISAASTPMMRRGPDGPRTLCNAC) form a GATA-type zinc finger.

The protein belongs to the type IV zinc-finger family. Class C subfamily.

It is found in the nucleus. Transcriptional activator that specifically binds 5'-GATA-3' or 5'-GAT-3' motifs within gene promoters. The chain is GATA transcription factor 17 from Oryza sativa subsp. japonica (Rice).